The chain runs to 305 residues: Mas-related G-protein coupled receptor member A7 (305 aa).

Over 1-17 the chain is Extracellular; the sequence is MDETSPRSIDIESLIPN. Residues 18–38 traverse the membrane as a helical segment; that stretch reads LMIIIFGLVGLTGNAIVLWLL. Topologically, residues 39 to 46 are cytoplasmic; the sequence is GFCLHRNA. A helical membrane pass occupies residues 47-67; the sequence is FLVYILNLALADFLFLLCHFI. At 68–81 the chain is on the extracellular side; sequence NSAMFLLKVPIPNG. Residues 82 to 102 traverse the membrane as a helical segment; it reads IFVYCFYTIKMVLYITGLSML. Over 103-129 the chain is Cytoplasmic; the sequence is SAISTERCLSVLCPIWYHCRRPEHTST. Residues 130–150 form a helical membrane-spanning segment; sequence VMCAVIWIFSVLICILKEYFC. Residues 151–167 lie on the Extracellular side of the membrane; the sequence is DFFGTKLGNYYVCQASN. A helical transmembrane segment spans residues 168 to 188; sequence FFMGAYLMFLFVVLCLSTLAL. Topologically, residues 189-211 are cytoplasmic; it reads LARLFCGAEKMKFTRLFVTIMLT. A helical membrane pass occupies residues 212–232; that stretch reads ILVFLLCGLPWGFFWFLLIWI. At 233 to 244 the chain is on the extracellular side; that stretch reads KGGFSVLDYRLY. A helical transmembrane segment spans residues 245-265; the sequence is LASIVLTVVNSCANPIIYFFV. Residues 266 to 305 lie on the Cytoplasmic side of the membrane; it reads GSFRHRLKHQTLKMVLQSALQDTPETHENMVEMSRIKAEQ.

Belongs to the G-protein coupled receptor 1 family. Mas subfamily. In terms of tissue distribution, expressed in a subset of sensory neurons that includes nociceptors. Expressed in the subclass of non-peptidergic sensory neurons that are IB4(+) and VR1(-).

Its subcellular location is the cell membrane. Its function is as follows. Orphan receptor. May be a receptor for RFamide-family neuropeptides such as NPFF and NPAF, which are analgesic in vivo. May regulate nociceptor function and/or development, including the sensation or modulation of pain. In Mus musculus (Mouse), this protein is Mas-related G-protein coupled receptor member A7 (Mrgpra7).